The sequence spans 156 residues: MDKKVTEVVEAFAQPIVEELNLELVDVEYVKEGQDWFLRVFIDSEKGVDIEECGAVSERLSEALDKEDPIPHLYFLDVSSPGAERPLKKEKDFQQAVGKQVAIKTYEPIDGEKMFEGKLLSYDGTTITLLLTIKTRKKEIQISMDKVANARLAVTF.

It belongs to the RimP family.

Its subcellular location is the cytoplasm. In terms of biological role, required for maturation of 30S ribosomal subunits. This chain is Ribosome maturation factor RimP, found in Bacillus cereus (strain B4264).